Consider the following 29-residue polypeptide: GFISTVKNLATNVAGTVIDTIKCKVTGGC.

A disulfide bond links cysteine 23 and cysteine 29.

In terms of tissue distribution, expressed by the skin glands.

Its subcellular location is the secreted. Functionally, mast cell degranulating peptide. Causes histamine release from rat peritoneal mast cells in vitro. Has antibacterial activity against the Gram-negative bacterium E.coli K12 and Gram-positive bacterium M.luteus NCT C2665. The sequence is that of Ranatuerin-2SEa from Lithobates sevosus (Dusky gopher frog).